A 903-amino-acid polypeptide reads, in one-letter code: Valine--tRNA ligase (903 aa).

Over residues Met1 to Asn15 the composition is skewed to polar residues. The disordered stretch occupies residues Met1–Lys22. Residues Pro61–His71 carry the 'HIGH' region motif. The 'KMSKS' region motif lies at Lys552–Ser556. An ATP-binding site is contributed by Lys555. The stretch at Thr836 to Leu902 forms a coiled coil.

It belongs to the class-I aminoacyl-tRNA synthetase family. ValS type 1 subfamily. In terms of assembly, monomer.

The protein localises to the cytoplasm. The enzyme catalyses tRNA(Val) + L-valine + ATP = L-valyl-tRNA(Val) + AMP + diphosphate. Catalyzes the attachment of valine to tRNA(Val). As ValRS can inadvertently accommodate and process structurally similar amino acids such as threonine, to avoid such errors, it has a 'posttransfer' editing activity that hydrolyzes mischarged Thr-tRNA(Val) in a tRNA-dependent manner. The polypeptide is Valine--tRNA ligase (Corynebacterium efficiens (strain DSM 44549 / YS-314 / AJ 12310 / JCM 11189 / NBRC 100395)).